Here is a 355-residue protein sequence, read N- to C-terminus: S-adenosylmethionine:tRNA ribosyltransferase-isomerase (355 aa).

It belongs to the QueA family. In terms of assembly, monomer.

The protein resides in the cytoplasm. The enzyme catalyses 7-aminomethyl-7-carbaguanosine(34) in tRNA + S-adenosyl-L-methionine = epoxyqueuosine(34) in tRNA + adenine + L-methionine + 2 H(+). The protein operates within tRNA modification; tRNA-queuosine biosynthesis. In terms of biological role, transfers and isomerizes the ribose moiety from AdoMet to the 7-aminomethyl group of 7-deazaguanine (preQ1-tRNA) to give epoxyqueuosine (oQ-tRNA). The chain is S-adenosylmethionine:tRNA ribosyltransferase-isomerase from Burkholderia lata (strain ATCC 17760 / DSM 23089 / LMG 22485 / NCIMB 9086 / R18194 / 383).